A 99-amino-acid chain; its full sequence is RNA-binding protein Hfq (99 aa).

In terms of domain architecture, Sm spans 9-68; that stretch reads DPYLNALRRERIPVSIYLVNGIKLQGQIESFDQFVILLKNTVNQMVYKHAISTVVPARSV. The segment at 67–99 is disordered; that stretch reads SVSHHNNNAQQQYQQQAAQAASAQSNETSSQAE. The span at 72–99 shows a compositional bias: low complexity; the sequence is NNNAQQQYQQQAAQAASAQSNETSSQAE.

It belongs to the Hfq family. As to quaternary structure, homohexamer.

In terms of biological role, RNA chaperone that binds small regulatory RNA (sRNAs) and mRNAs to facilitate mRNA translational regulation in response to envelope stress, environmental stress and changes in metabolite concentrations. Also binds with high specificity to tRNAs. This chain is RNA-binding protein Hfq, found in Actinobacillus succinogenes (strain ATCC 55618 / DSM 22257 / CCUG 43843 / 130Z).